A 235-amino-acid chain; its full sequence is Aspartate/glutamate leucyltransferase (235 aa).

The protein belongs to the R-transferase family. Bpt subfamily.

The protein localises to the cytoplasm. The enzyme catalyses N-terminal L-glutamyl-[protein] + L-leucyl-tRNA(Leu) = N-terminal L-leucyl-L-glutamyl-[protein] + tRNA(Leu) + H(+). The catalysed reaction is N-terminal L-aspartyl-[protein] + L-leucyl-tRNA(Leu) = N-terminal L-leucyl-L-aspartyl-[protein] + tRNA(Leu) + H(+). Functionally, functions in the N-end rule pathway of protein degradation where it conjugates Leu from its aminoacyl-tRNA to the N-termini of proteins containing an N-terminal aspartate or glutamate. This is Aspartate/glutamate leucyltransferase from Stutzerimonas stutzeri (strain A1501) (Pseudomonas stutzeri).